Consider the following 146-residue polypeptide: Large ribosomal subunit protein bL21 (146 aa).

The tract at residues 117–146 (ITIGKSAPKSSSKKETVKKETKPKSEKSTN) is disordered. Over residues 128–146 (SKKETVKKETKPKSEKSTN) the composition is skewed to basic and acidic residues.

The protein belongs to the bacterial ribosomal protein bL21 family. Part of the 50S ribosomal subunit. Contacts protein L20.

In terms of biological role, this protein binds to 23S rRNA in the presence of protein L20. The chain is Large ribosomal subunit protein bL21 from Prochlorococcus marinus (strain MIT 9301).